The chain runs to 285 residues: Nudix hydrolase 15, mitochondrial (285 aa).

The N-terminal 23 residues, 1-23, are a transit peptide targeting the mitochondrion; it reads MFLLYRRLPSFARTTTTTLLCKS. N-acetylmethionine is present on Met-24. 2 disordered regions span residues 51–72 and 129–152; these read RQYKPPPSSSFDDSEEMQTDQE and THSGEVSLPGGKAEEDDKDDGMTA. The region spanning 99-255 is the Nudix hydrolase domain; the sequence is PKRAAVLICL…DKDYMIWGLT (157 aa). Residues 140–161 carry the Nudix box motif; sequence KAEEDDKDDGMTATREAEEEIG. Positions 155 and 159 each coordinate Mg(2+).

It belongs to the Nudix hydrolase family. Mg(2+) is required as a cofactor. It depends on Mn(2+) as a cofactor. Expressed in roots, leaves, stems and inflorescences.

Its subcellular location is the mitochondrion. Coenzyme A diphosphatase which mediates the cleavage of oxidized CoA. Can use malonyl-CoA, hexanoyl-CoA, lauroyl-CoA, myristoyl-CoA and palmitoyl-CoA as substrates, but not isobutyryl-CoA or propionyl-CoA. This chain is Nudix hydrolase 15, mitochondrial (NUDT15), found in Arabidopsis thaliana (Mouse-ear cress).